Consider the following 139-residue polypeptide: ATP synthase epsilon chain (139 aa).

The protein belongs to the ATPase epsilon chain family. F-type ATPases have 2 components, CF(1) - the catalytic core - and CF(0) - the membrane proton channel. CF(1) has five subunits: alpha(3), beta(3), gamma(1), delta(1), epsilon(1). CF(0) has three main subunits: a, b and c.

Its subcellular location is the cell membrane. Its function is as follows. Produces ATP from ADP in the presence of a proton gradient across the membrane. The polypeptide is ATP synthase epsilon chain (Roseiflexus sp. (strain RS-1)).